A 142-amino-acid polypeptide reads, in one-letter code: Hemoglobin subunit alpha-3 (142 aa).

Positions 2-142 constitute a Globin domain; that stretch reads VLSAADKSNV…VSTVLTSKYR (141 aa). His59 contacts O2. His88 lines the heme b pocket.

Belongs to the globin family. In terms of assembly, heterotetramer of two alpha chains and two beta chains. As to expression, red blood cells.

Functionally, involved in oxygen transport from the lung to the various peripheral tissues. The polypeptide is Hemoglobin subunit alpha-3 (Bubalus bubalis (Domestic water buffalo)).